The following is a 61-amino-acid chain: Delta-actitoxin-Avd2c (61 aa).

The N-terminal stretch at 1–20 (MMNRLLVFLMLGAFMLVVSA) is a signal peptide. Residues 21–31 (NDAYGGDESLG) constitute a propeptide that is removed on maturation. Intrachain disulfides connect Cys-36-Cys-51, Cys-37-Cys-45, and Cys-39-Cys-56.

This sequence belongs to the sea anemone short toxin (type III) family.

It localises to the secreted. The protein localises to the nematocyst. Functionally, sodium channel inhibitor. 5 uM completely inhibits voltage-gated sodium channel (Nav) inactivation. This chain is Delta-actitoxin-Avd2c, found in Anemonia viridis (Snakelocks anemone).